Here is a 643-residue protein sequence, read N- to C-terminus: Probable extracellular metalloproteinase 4 (643 aa).

The first 18 residues, 1–18 (MHGLLLAGLLALPLNVFA), serve as a signal peptide directing secretion. A propeptide spanning residues 19-254 (HPTESHSSGV…VHSVVDYVSA (236 aa)) is cleaved from the precursor. The segment at 49–69 (SDAVPKQDGESFTTSSTGDDN) is disordered. The segment covering 58–69 (ESFTTSSTGDDN) has biased composition (polar residues). Residues Asn-271 and Asn-420 are each glycosylated (N-linked (GlcNAc...) asparagine). Position 437 (His-437) interacts with Zn(2+). The active site involves Glu-438. His-441 lines the Zn(2+) pocket. N-linked (GlcNAc...) asparagine glycosylation is found at Asn-603 and Asn-629.

Belongs to the peptidase M36 family. Zn(2+) is required as a cofactor.

It localises to the secreted. Its function is as follows. Secreted metalloproteinase probably acting as a virulence factor. This is Probable extracellular metalloproteinase 4 (MEP4) from Trichophyton verrucosum (strain HKI 0517).